The following is a 413-amino-acid chain: Serine/threonine transporter SstT (413 aa).

10 helical membrane-spanning segments follow: residues 18–38 (LSLVTQILIGLIAGIALALFA), 52–72 (FVSALKAVAPILVFVLVMASI), 86–106 (ILFLYLLGTFAAAVVAVIASM), 119–139 (IAVSAPGGISEVLQSLLLSVV), 145–165 (ALMNANFIGILAWAIGMGVAI), 196–216 (LGIFGLVASTLATSGFGALIG), 221–241 (LAVLLGCMLFVALVMNPLIVF), 292–312 (VSIPLGATINMAGAAITITVL), 320–340 (LGIAVDIPTAILLSVVAAICA), and 360–380 (LFGIPSEIAMQVVAVGFIIGV).

Belongs to the dicarboxylate/amino acid:cation symporter (DAACS) (TC 2.A.23) family.

The protein resides in the cell inner membrane. It carries out the reaction L-serine(in) + Na(+)(in) = L-serine(out) + Na(+)(out). It catalyses the reaction L-threonine(in) + Na(+)(in) = L-threonine(out) + Na(+)(out). Involved in the import of serine and threonine into the cell, with the concomitant import of sodium (symport system). This Pseudomonas fluorescens (strain Pf0-1) protein is Serine/threonine transporter SstT.